The primary structure comprises 530 residues: PC4 and SFRS1-interacting protein (530 aa).

A PWWP domain is found at 1–64; the sequence is MTRDFKPGDL…PKDIFPYSEN (64 aa). A Glycyl lysine isopeptide (Lys-Gly) (interchain with G-Cter in SUMO2) cross-link involves residue Lys75. The interval 86–349 is disordered; it reads NNPKVKFSSQ…VEKKRETSMD (264 aa). Residues 92–104 show a composition bias toward polar residues; it reads FSSQQASTKQSNA. Phosphoserine is present on residues Ser102, Ser105, and Ser106. Positions 113-135 are enriched in basic and acidic residues; sequence KETSVSKEDTDHEEKASNEDVTK. Phosphothreonine is present on residues Thr115 and Thr122. Ser129 carries the phosphoserine modification. Phosphothreonine is present on Thr141. Positions 144 to 153 are enriched in basic residues; it reads AARRGRKRKA. Residues 146–156 carry the Nuclear localization signal motif; it reads RRGRKRKAEKQ. Thr167 is subject to Phosphothreonine. 2 positions are modified to phosphoserine: Ser177 and Ser206. Positions 213–261 are enriched in basic and acidic residues; it reads EEDKSKKKGQEEKQPKKQLKKDEEGQKEEDKPRKEPDKKEGKKEVESKR. Ser271 is modified (phosphoserine). Phosphothreonine is present on Thr272. Phosphoserine is present on residues Ser273 and Ser275. Residues 274-283 are compositionally biased toward acidic residues; sequence DSEEEGDDQE. Over residues 287–302 the composition is skewed to basic residues; sequence KRKGGRNFQTAHRRNM. The span at 305–349 shows a compositional bias: basic and acidic residues; the sequence is GQHEKEAADRKRKQEEQMETEQQNKDEGKKPEVKKVEKKRETSMD. 2 coiled-coil regions span residues 306–334 and 371–395; these read QHEK…EGKK and NRCI…KHTE. The interval 340 to 417 is integrase-binding domain (IBD); the sequence is VEKKRETSMD…VSQIIMEKST (78 aa). Ser434 is subject to Phosphoserine. Residue Thr437 is modified to Phosphothreonine. The residue at position 443 (Ser443) is a Phosphoserine. Residues 446-473 show a composition bias toward basic and acidic residues; sequence EQRQHEEANKTKDQGKKGPNKKLDKEQT. The disordered stretch occupies residues 446–530; that stretch reads EQRQHEEANK…ISLKDSTLDN (85 aa). Positions 474–494 are enriched in polar residues; the sequence is GSKTLNGGSDAPDSNQAQHNG. The span at 498–530 shows a compositional bias: basic and acidic residues; it reads EESKDKHEASSKKKPSNEERETEISLKDSTLDN. A Citrulline modification is found at Arg517. A Phosphoserine modification is found at Ser522. Position 527 is a phosphothreonine (Thr527).

It belongs to the HDGF family. Monomer. Interacts with IFRD1/PC4. Interacts (via IBD domain) with POGZ (via IBM motif) and CDCA7L (via IBM motifs). Interacts (via IBD domain) with KMT2A (via IBM motifs) with a moderate affinity whereas interacts with the KMT2A-MEN1 complex with a greater affinity; MEN1 enhances interaction of KMT2A with PSIP1. Interacts (via IBD domain) with IWS1 (via IBM motif), MED1 (via IBM motif) and DBF4 (via IBM motifs). As to quaternary structure, (Microbial infection) Interacts (via IBD domain) with feline immunodeficiency virus (FIV) integrase (IN), determining its nuclear localization, its tight association with chromatin and its protection from the proteasome. Citrullinated by PADI4.

It is found in the nucleus. Its function is as follows. Transcriptional coactivator involved in neuroepithelial stem cell differentiation and neurogenesis. Involved in particular in lens epithelial cell gene regulation and stress responses. May play an important role in lens epithelial to fiber cell terminal differentiation. May play a protective role during stress-induced apoptosis. In Felis catus (Cat), this protein is PC4 and SFRS1-interacting protein (PSIP1).